Reading from the N-terminus, the 612-residue chain is Kelch repeat and BTB domain-containing protein 3 (612 aa).

A BTB domain is found at 52–119 (YDFKIIMKDE…AYTGKTKITD (68 aa)). The BACK domain maps to 150–250 (NLVNCLQLLS…VRLHQLSEET (101 aa)). Kelch repeat units lie at residues 291–337 (STTE…GSSL), 339–390 (SYGE…STMK), 400–450 (MALD…PEAS), 452–502 (CQNV…ATLI), and 548–595 (GIED…FYCQ).

This chain is Kelch repeat and BTB domain-containing protein 3, found in Pongo abelii (Sumatran orangutan).